The chain runs to 483 residues: ATP synthase subunit beta (483 aa).

Glycine 167–threonine 174 contributes to the ATP binding site.

It belongs to the ATPase alpha/beta chains family. F-type ATPases have 2 components, CF(1) - the catalytic core - and CF(0) - the membrane proton channel. CF(1) has five subunits: alpha(3), beta(3), gamma(1), delta(1), epsilon(1). CF(0) has three main subunits: a(1), b(2) and c(9-12). The alpha and beta chains form an alternating ring which encloses part of the gamma chain. CF(1) is attached to CF(0) by a central stalk formed by the gamma and epsilon chains, while a peripheral stalk is formed by the delta and b chains.

Its subcellular location is the cell membrane. It catalyses the reaction ATP + H2O + 4 H(+)(in) = ADP + phosphate + 5 H(+)(out). Its function is as follows. Produces ATP from ADP in the presence of a proton gradient across the membrane. The catalytic sites are hosted primarily by the beta subunits. This chain is ATP synthase subunit beta, found in Paenarthrobacter aurescens (strain TC1).